The primary structure comprises 155 residues: Small ribosomal subunit protein uS7cz/uS7cy (155 aa).

This sequence belongs to the universal ribosomal protein uS7 family. Part of the 30S ribosomal subunit.

It is found in the plastid. Its subcellular location is the chloroplast. One of the primary rRNA binding proteins, it binds directly to 16S rRNA where it nucleates assembly of the head domain of the 30S subunit. This chain is Small ribosomal subunit protein uS7cz/uS7cy (rps7-A), found in Nymphaea alba (White water-lily).